We begin with the raw amino-acid sequence, 299 residues long: Proline iminopeptidase (299 aa).

An AB hydrolase-1 domain is found at 29–279 (PLLLLHGGPG…SRHMAFIDEP (251 aa)). Catalysis depends on S105, which acts as the Nucleophile. D245 is a catalytic residue. H272 functions as the Proton donor in the catalytic mechanism.

Belongs to the peptidase S33 family.

It localises to the cell envelope. It catalyses the reaction Release of N-terminal proline from a peptide.. Functionally, releases the N-terminal proline from various substrates. This chain is Proline iminopeptidase, found in Levilactobacillus brevis (strain ATCC 367 / BCRC 12310 / CIP 105137 / JCM 1170 / LMG 11437 / NCIMB 947 / NCTC 947) (Lactobacillus brevis).